The chain runs to 171 residues: Translationally-controlled tumor protein homolog (171 aa).

Residues 1 to 171 (MKIWKDVFTG…FKHGLEEEKF (171 aa)) enclose the TCTP domain.

It belongs to the TCTP family.

The protein resides in the cytoplasm. Functionally, involved in calcium binding and microtubule stabilization. The protein is Translationally-controlled tumor protein homolog of Anopheles gambiae (African malaria mosquito).